The chain runs to 765 residues: Dipeptidyl peptidase 4 (765 aa).

Residues 1-6 (MKTPWK) lie on the Cytoplasmic side of the membrane. Residues 7–29 (VLLGLLAIAALVTVITVPVVLLT) traverse the membrane as a helical; Signal-anchor for type II membrane protein segment. Topologically, residues 30–765 (KGNDASTDSR…HFLKQCFSLL (736 aa)) are extracellular. N-linked (GlcNAc...) asparagine glycans are attached at residues N84, N91, N149, N218, N228, N271, N280, N320, and N392. 3 disulfide bridges follow: C384–C393, C443–C446, and C453–C471. The N-linked (GlcNAc...) asparagine glycan is linked to N495. The Charge relay system role is filled by S629. C648 and C761 are disulfide-bonded. A glycan (N-linked (GlcNAc...) asparagine) is linked at N684. Catalysis depends on charge relay system residues D707 and H739.

This sequence belongs to the peptidase S9B family. DPPIV subfamily. Monomer. Homodimer. Heterodimer with Seprase (FAP). Requires homodimerization for optimal dipeptidyl peptidase activity and T-cell costimulation. Found in a membrane raft complex, at least composed of BCL10, CARD11, DPP4 and IKBKB. Associates with collagen. Interacts with PTPRC; the interaction is enhanced in an interleukin-12-dependent manner in activated lymphocytes. Interacts (via extracellular domain) with ADA; does not inhibit its dipeptidyl peptidase activity. Interacts with CAV1 (via the N-terminus); the interaction is direct. Interacts (via cytoplasmic tail) with CARD11 (via PDZ domain); its homodimerization is necessary for interaction with CARD11. Interacts with IGF2R; the interaction is direct. Interacts with GPC3. In terms of processing, the soluble form (Dipeptidyl peptidase 4 soluble form also named SDPP) derives from the membrane form (Dipeptidyl peptidase 4 membrane form also named MDPP) by proteolytic processing. Post-translationally, N- and O-Glycosylated. Phosphorylated. Mannose 6-phosphate residues in the carbohydrate moiety are necessary for interaction with IGF2R in activated T-cells. Mannose 6-phosphorylation is induced during T-cell activation. As to expression, intestinal epithelium, dendritic cells and several immune system tissues.

It localises to the secreted. Its subcellular location is the cell membrane. The protein localises to the apical cell membrane. It is found in the cell projection. The protein resides in the invadopodium membrane. It localises to the lamellipodium membrane. Its subcellular location is the cell junction. The protein localises to the membrane raft. The catalysed reaction is Release of an N-terminal dipeptide, Xaa-Yaa-|-Zaa-, from a polypeptide, preferentially when Yaa is Pro, provided Zaa is neither Pro nor hydroxyproline.. With respect to regulation, inhibited by GPC3 and diprotin A. Its function is as follows. Cell surface glycoprotein receptor involved in the costimulatory signal essential for T-cell receptor (TCR)-mediated T-cell activation. Acts as a positive regulator of T-cell coactivation, by binding at least ADA, CAV1, IGF2R, and PTPRC. Its binding to CAV1 and CARD11 induces T-cell proliferation and NF-kappa-B activation in a T-cell receptor/CD3-dependent manner. Its interaction with ADA also regulates lymphocyte-epithelial cell adhesion. In association with FAP is involved in the pericellular proteolysis of the extracellular matrix (ECM), the migration and invasion of endothelial cells into the ECM. May be involved in the promotion of lymphatic endothelial cells adhesion, migration and tube formation. When overexpressed, enhanced cell proliferation, a process inhibited by GPC3. Also acts as a serine exopeptidase with a dipeptidyl peptidase activity that regulates various physiological processes by cleaving peptides in the circulation, including many chemokines, mitogenic growth factors, neuropeptides and peptide hormones. Removes N-terminal dipeptides sequentially from polypeptides having unsubstituted N-termini provided that the penultimate residue is proline. This Bos taurus (Bovine) protein is Dipeptidyl peptidase 4 (DPP4).